Consider the following 168-residue polypeptide: Phosphopantetheine adenylyltransferase (168 aa).

A substrate-binding site is contributed by T11. ATP is bound by residues 11-12 (TF) and H19. 3 residues coordinate substrate: K43, T75, and R89. ATP-binding positions include 90–92 (GIR), E100, and 125–131 (WSYMSSS).

Belongs to the bacterial CoaD family. In terms of assembly, homohexamer. The cofactor is Mg(2+).

Its subcellular location is the cytoplasm. It carries out the reaction (R)-4'-phosphopantetheine + ATP + H(+) = 3'-dephospho-CoA + diphosphate. Its pathway is cofactor biosynthesis; coenzyme A biosynthesis; CoA from (R)-pantothenate: step 4/5. Functionally, reversibly transfers an adenylyl group from ATP to 4'-phosphopantetheine, yielding dephospho-CoA (dPCoA) and pyrophosphate. This is Phosphopantetheine adenylyltransferase from Wigglesworthia glossinidia brevipalpis.